We begin with the raw amino-acid sequence, 259 residues long: Global transcriptional regulator CodY (259 aa).

A GAF domain region spans residues 1-155; sequence MELLAKTRKL…SATVVGMEIL (155 aa). Residues 203–222 constitute a DNA-binding region (H-T-H motif); sequence ASKIADRVGITRSVIVNALR. The residue at position 215 (Ser-215) is a Phosphoserine.

This sequence belongs to the CodY family.

The protein localises to the cytoplasm. Its function is as follows. DNA-binding global transcriptional regulator which is involved in the adaptive response to starvation and acts by directly or indirectly controlling the expression of numerous genes in response to nutrient availability. During rapid exponential growth, CodY is highly active and represses genes whose products allow adaptation to nutrient depletion. The protein is Global transcriptional regulator CodY of Bacillus cytotoxicus (strain DSM 22905 / CIP 110041 / 391-98 / NVH 391-98).